A 332-amino-acid chain; its full sequence is Biotin synthase (332 aa).

The region spanning 53 to 282 is the Radical SAM core domain; that stretch reads HFGKKVKLNM…TKEIRISGGR (230 aa). [4Fe-4S] cluster-binding residues include Cys71, Cys75, and Cys78. Positions 115, 147, 207, and 277 each coordinate [2Fe-2S] cluster.

Belongs to the radical SAM superfamily. Biotin synthase family. Homodimer. [4Fe-4S] cluster is required as a cofactor. The cofactor is [2Fe-2S] cluster.

The catalysed reaction is (4R,5S)-dethiobiotin + (sulfur carrier)-SH + 2 reduced [2Fe-2S]-[ferredoxin] + 2 S-adenosyl-L-methionine = (sulfur carrier)-H + biotin + 2 5'-deoxyadenosine + 2 L-methionine + 2 oxidized [2Fe-2S]-[ferredoxin]. It functions in the pathway cofactor biosynthesis; biotin biosynthesis; biotin from 7,8-diaminononanoate: step 2/2. Catalyzes the conversion of dethiobiotin (DTB) to biotin by the insertion of a sulfur atom into dethiobiotin via a radical-based mechanism. This Bacillus mycoides (strain KBAB4) (Bacillus weihenstephanensis) protein is Biotin synthase.